A 392-amino-acid polypeptide reads, in one-letter code: Ribosomal RNA large subunit methyltransferase G (392 aa).

The protein belongs to the methyltransferase superfamily. RlmG family.

It is found in the cytoplasm. It catalyses the reaction guanosine(1835) in 23S rRNA + S-adenosyl-L-methionine = N(2)-methylguanosine(1835) in 23S rRNA + S-adenosyl-L-homocysteine + H(+). Functionally, specifically methylates the guanine in position 1835 (m2G1835) of 23S rRNA. The chain is Ribosomal RNA large subunit methyltransferase G from Shewanella frigidimarina (strain NCIMB 400).